Consider the following 404-residue polypeptide: Exodeoxyribonuclease 7 large subunit (404 aa).

It belongs to the XseA family. As to quaternary structure, heterooligomer composed of large and small subunits.

It is found in the cytoplasm. It catalyses the reaction Exonucleolytic cleavage in either 5'- to 3'- or 3'- to 5'-direction to yield nucleoside 5'-phosphates.. Its function is as follows. Bidirectionally degrades single-stranded DNA into large acid-insoluble oligonucleotides, which are then degraded further into small acid-soluble oligonucleotides. This Fusobacterium nucleatum subsp. nucleatum (strain ATCC 25586 / DSM 15643 / BCRC 10681 / CIP 101130 / JCM 8532 / KCTC 2640 / LMG 13131 / VPI 4355) protein is Exodeoxyribonuclease 7 large subunit.